The primary structure comprises 261 residues: Indole-3-glycerol phosphate synthase (261 aa).

This sequence belongs to the TrpC family.

It catalyses the reaction 1-(2-carboxyphenylamino)-1-deoxy-D-ribulose 5-phosphate + H(+) = (1S,2R)-1-C-(indol-3-yl)glycerol 3-phosphate + CO2 + H2O. It participates in amino-acid biosynthesis; L-tryptophan biosynthesis; L-tryptophan from chorismate: step 4/5. The chain is Indole-3-glycerol phosphate synthase from Burkholderia thailandensis (strain ATCC 700388 / DSM 13276 / CCUG 48851 / CIP 106301 / E264).